The following is a 363-amino-acid chain: Ribosomal RNA large subunit methyltransferase M (363 aa).

S-adenosyl-L-methionine contacts are provided by residues serine 190, 223–226 (CPGG), aspartate 242, aspartate 262, and aspartate 280. Lysine 309 serves as the catalytic Proton acceptor.

The protein belongs to the class I-like SAM-binding methyltransferase superfamily. RNA methyltransferase RlmE family. RlmM subfamily. Monomer.

It localises to the cytoplasm. The catalysed reaction is cytidine(2498) in 23S rRNA + S-adenosyl-L-methionine = 2'-O-methylcytidine(2498) in 23S rRNA + S-adenosyl-L-homocysteine + H(+). In terms of biological role, catalyzes the 2'-O-methylation at nucleotide C2498 in 23S rRNA. The protein is Ribosomal RNA large subunit methyltransferase M of Actinobacillus pleuropneumoniae serotype 5b (strain L20).